The primary structure comprises 299 residues: GTPase Era (299 aa).

The Era-type G domain occupies 5–175; the sequence is RSGFVCFVGR…TNVLVSQLPP (171 aa). The G1 stretch occupies residues 13–20; sequence GRPNTGKS. GTP is bound at residue 13 to 20; that stretch reads GRPNTGKS. Residues 39 to 43 are G2; the sequence is QTTRH. Residues 60–63 are G3; that stretch reads DTPG. GTP-binding positions include 60 to 64 and 124 to 127; these read DTPGL and TKID. The segment at 124–127 is G4; the sequence is TKID. The segment at 154–156 is G5; sequence VSA. A KH type-2 domain is found at 206-285; sequence VRDELPHSLA…YLDLRVKIAK (80 aa).

This sequence belongs to the TRAFAC class TrmE-Era-EngA-EngB-Septin-like GTPase superfamily. Era GTPase family. As to quaternary structure, monomer. Stays in the monomer conformation, irrespective of the presence of GTP.

It is found in the cell envelope. The protein localises to the secreted. The protein resides in the cell wall. Its activity is regulated as follows. Co-purified with RNA upon overexpression in E.coli, but RNAs do not appear to influence the GTPase activity. Exhibits GTPase activity. Binds RNA but is probably not involved in ribosome assembly in mycobacteria. Cannot use ATP. This is GTPase Era from Mycolicibacterium smegmatis (strain ATCC 700084 / mc(2)155) (Mycobacterium smegmatis).